Consider the following 144-residue polypeptide: Putative pre-16S rRNA nuclease (144 aa).

It belongs to the YqgF nuclease family.

It localises to the cytoplasm. Could be a nuclease involved in processing of the 5'-end of pre-16S rRNA. The chain is Putative pre-16S rRNA nuclease from Pseudomonas paraeruginosa (strain DSM 24068 / PA7) (Pseudomonas aeruginosa (strain PA7)).